The primary structure comprises 632 residues: Pentatricopeptide repeat-containing protein ELI1, chloroplastic (632 aa).

The N-terminal 19 residues, 1 to 19 (MASSPLLATSLPQNQLSTT), are a transit peptide targeting the chloroplast. PPR repeat units lie at residues 94-128 (DLFL…EINP), 129-159 (NEFT…GLGI), 160-194 (DPYV…SLVS), 196-221 (TAMI…MCER), 222-256 (DIVS…GKPK), 258-292 (DEIT…RIRL), 293-323 (NVKV…TPRK), 324-354 (DIVA…MQGI), 360-395 (TDIT…GIKP), and 396-426 (KIEH…MNMD). The type E motif stretch occupies residues 431-506 (LWSSVLGSCK…EPGISTIEIE (76 aa)). The tract at residues 497 to 512 (EPGISTIEIENKVHEF) is required for function in RNA editing. Residues 507 to 537 (NKVHEFRAGDREHSKSKEIYTMLRKISERIK) form a type E(+) motif region. A type DYW motif region spans residues 538–632 (SHGYVPNTNT…DGSCSCGDFW (95 aa)).

This sequence belongs to the PPR family. PCMP-H subfamily. Zn(2+) is required as a cofactor.

Its subcellular location is the plastid. The protein resides in the chloroplast. Functionally, plays a major role in single RNA editing events in chloroplasts. Acts as a site-recognition transacting factor involved in the edition of the site 5 of ndhB1 and ndhB2 (ndhB1-5 and ndhB2-5 sites corresponding to cytidine-830), which are plastid-encoded subunits of the NADH-plastoquinone oxidoreductase. May provide the catalytic activity for editing site conversion. The sequence is that of Pentatricopeptide repeat-containing protein ELI1, chloroplastic from Arabidopsis thaliana (Mouse-ear cress).